The primary structure comprises 319 residues: Ankyrin repeat domain-containing protein 1 (319 aa).

Residues 46–65 are disordered; it reads KTLPANSVKQGEEQRKSEKL. Residues 53–89 are a coiled coil; that stretch reads VKQGEEQRKSEKLREAELKKKKLEQRSKLENLEDLEI. The span at 55–65 shows a compositional bias: basic and acidic residues; it reads QGEEQRKSEKL. ANK repeat units follow at residues 152–181, 185–214, 218–247, 251–280, and 284–315; these read YKRT…QIEF, LEST…KISA, LLST…DLNA, EGDT…DLKV, and AGKT…KNSR.

As to quaternary structure, interacts with TTN/titin and YBX1. In terms of tissue distribution, expressed in heart, cardiac muscle.

It localises to the nucleus. Its function is as follows. May play an important role in endothelial cell activation. May act as a nuclear transcription factor that negatively regulates the expression of cardiac genes. This Mus musculus (Mouse) protein is Ankyrin repeat domain-containing protein 1 (Ankrd1).